The chain runs to 307 residues: Acetyl-coenzyme A carboxylase carboxyl transferase subunit beta (307 aa).

One can recognise a CoA carboxyltransferase N-terminal domain in the interval Leu-25–Pro-294.

Belongs to the AccD/PCCB family. Acetyl-CoA carboxylase is a heterohexamer composed of biotin carboxyl carrier protein (AccB), biotin carboxylase (AccC) and two subunits each of ACCase subunit alpha (AccA) and ACCase subunit beta (AccD).

The protein resides in the cytoplasm. The catalysed reaction is N(6)-carboxybiotinyl-L-lysyl-[protein] + acetyl-CoA = N(6)-biotinyl-L-lysyl-[protein] + malonyl-CoA. The protein operates within lipid metabolism; malonyl-CoA biosynthesis; malonyl-CoA from acetyl-CoA: step 1/1. Its function is as follows. Component of the acetyl coenzyme A carboxylase (ACC) complex. Biotin carboxylase (BC) catalyzes the carboxylation of biotin on its carrier protein (BCCP) and then the CO(2) group is transferred by the transcarboxylase to acetyl-CoA to form malonyl-CoA. In Chelativorans sp. (strain BNC1), this protein is Acetyl-coenzyme A carboxylase carboxyl transferase subunit beta.